A 515-amino-acid polypeptide reads, in one-letter code: Proline--tRNA ligase (515 aa).

The protein belongs to the class-II aminoacyl-tRNA synthetase family. ProS type 3 subfamily. As to quaternary structure, homodimer.

It localises to the cytoplasm. The enzyme catalyses tRNA(Pro) + L-proline + ATP = L-prolyl-tRNA(Pro) + AMP + diphosphate. Catalyzes the attachment of proline to tRNA(Pro) in a two-step reaction: proline is first activated by ATP to form Pro-AMP and then transferred to the acceptor end of tRNA(Pro). In Novosphingobium aromaticivorans (strain ATCC 700278 / DSM 12444 / CCUG 56034 / CIP 105152 / NBRC 16084 / F199), this protein is Proline--tRNA ligase.